Consider the following 229-residue polypeptide: Cytochrome c oxidase subunit 2 (229 aa).

The Mitochondrial intermembrane segment spans residues 1–14 (MANPSQFGFQDASS). A helical transmembrane segment spans residues 15-45 (PIMEELVEFHDHALMVALAICSLVLYLLALM). Topologically, residues 46 to 58 (LVEKLSSNTVDAQ) are mitochondrial matrix. The helical transmembrane segment at 59–86 (EVELIWTILPAIVLILLALPSLQILYMM) threads the bilayer. Residues 87 to 229 (DEIDEPDLTL…SWSSLLSTDS (143 aa)) lie on the Mitochondrial intermembrane side of the membrane. Cu cation contacts are provided by histidine 160, cysteine 195, glutamate 197, cysteine 199, histidine 203, and methionine 206. Glutamate 197 lines the Mg(2+) pocket.

This sequence belongs to the cytochrome c oxidase subunit 2 family. In terms of assembly, component of the cytochrome c oxidase (complex IV, CIV), a multisubunit enzyme composed of 14 subunits. The complex is composed of a catalytic core of 3 subunits MT-CO1, MT-CO2 and MT-CO3, encoded in the mitochondrial DNA, and 11 supernumerary subunits COX4I, COX5A, COX5B, COX6A, COX6B, COX6C, COX7A, COX7B, COX7C, COX8 and NDUFA4, which are encoded in the nuclear genome. The complex exists as a monomer or a dimer and forms supercomplexes (SCs) in the inner mitochondrial membrane with NADH-ubiquinone oxidoreductase (complex I, CI) and ubiquinol-cytochrome c oxidoreductase (cytochrome b-c1 complex, complex III, CIII), resulting in different assemblies (supercomplex SCI(1)III(2)IV(1) and megacomplex MCI(2)III(2)IV(2)). Found in a complex with TMEM177, COA6, COX18, COX20, SCO1 and SCO2. Interacts with TMEM177 in a COX20-dependent manner. Interacts with COX20. Interacts with COX16. Cu cation is required as a cofactor.

The protein localises to the mitochondrion inner membrane. It carries out the reaction 4 Fe(II)-[cytochrome c] + O2 + 8 H(+)(in) = 4 Fe(III)-[cytochrome c] + 2 H2O + 4 H(+)(out). Its function is as follows. Component of the cytochrome c oxidase, the last enzyme in the mitochondrial electron transport chain which drives oxidative phosphorylation. The respiratory chain contains 3 multisubunit complexes succinate dehydrogenase (complex II, CII), ubiquinol-cytochrome c oxidoreductase (cytochrome b-c1 complex, complex III, CIII) and cytochrome c oxidase (complex IV, CIV), that cooperate to transfer electrons derived from NADH and succinate to molecular oxygen, creating an electrochemical gradient over the inner membrane that drives transmembrane transport and the ATP synthase. Cytochrome c oxidase is the component of the respiratory chain that catalyzes the reduction of oxygen to water. Electrons originating from reduced cytochrome c in the intermembrane space (IMS) are transferred via the dinuclear copper A center (CU(A)) of subunit 2 and heme A of subunit 1 to the active site in subunit 1, a binuclear center (BNC) formed by heme A3 and copper B (CU(B)). The BNC reduces molecular oxygen to 2 water molecules using 4 electrons from cytochrome c in the IMS and 4 protons from the mitochondrial matrix. This Struthio camelus (Common ostrich) protein is Cytochrome c oxidase subunit 2 (MT-CO2).